Consider the following 106-residue polypeptide: Large ribosomal subunit protein bL21 (106 aa).

It belongs to the bacterial ribosomal protein bL21 family. Part of the 50S ribosomal subunit. Contacts protein L20.

This protein binds to 23S rRNA in the presence of protein L20. This Fervidobacterium nodosum (strain ATCC 35602 / DSM 5306 / Rt17-B1) protein is Large ribosomal subunit protein bL21.